A 424-amino-acid polypeptide reads, in one-letter code: 5-methylthioadenosine/S-adenosylhomocysteine deaminase (424 aa).

Residues His60 and His62 each coordinate Zn(2+). Substrate is bound by residues Glu89 and His181. His208 contacts Zn(2+). Positions 211 and 296 each coordinate substrate. Asp296 lines the Zn(2+) pocket.

Belongs to the metallo-dependent hydrolases superfamily. MTA/SAH deaminase family. Zn(2+) is required as a cofactor.

It catalyses the reaction S-adenosyl-L-homocysteine + H2O + H(+) = S-inosyl-L-homocysteine + NH4(+). The catalysed reaction is S-methyl-5'-thioadenosine + H2O + H(+) = S-methyl-5'-thioinosine + NH4(+). Catalyzes the deamination of 5-methylthioadenosine and S-adenosyl-L-homocysteine into 5-methylthioinosine and S-inosyl-L-homocysteine, respectively. Is also able to deaminate adenosine. The sequence is that of 5-methylthioadenosine/S-adenosylhomocysteine deaminase from Thermococcus onnurineus (strain NA1).